Reading from the N-terminus, the 33-residue chain is Gaegurin-3 (33 aa).

A disulfide bond links Cys-27 and Cys-33.

It belongs to the frog skin active peptide (FSAP) family. Brevinin subfamily. In terms of assembly, monomer. In terms of tissue distribution, expressed by the skin glands.

Its subcellular location is the secreted. In terms of biological role, has a non-hemolytic activity. Has a broad spectrum of activity against both Gram-positive and Gram-negative bacteria, fungi and protozoa. This is Gaegurin-3 (GGN3) from Glandirana rugosa (Japanese wrinkled frog).